The sequence spans 465 residues: MVMEKPSPLLVGREFVRQYYTLLNQAPDMLHRFYGKNSSYAHGGLDSNGKPADAVYGQKEIHRKVMSQNFTNCHTKIRHVDAHATLNDGVVVQVMGLLSNNNQALRRFMQTFVLAPEGSVANKFYVHNDIFRYQDEVFGGFVTEPQEESEEEVEEPEERQQTPEVVPDDSGTFYDQTVSNDLEEHLEEPVVEPEPEPEPEPEPEPVSDIQEDKPEAALEEAAPDDVQKSTSPAPADVAPAQEDLRTFSWASVTSKNLPPSGAVPVTGTPPHVVKVPASQPRPESKPDSQIPPQRPQRDQRVREQRINIPPQRGPRPIREAGEPGDVEPRRMVRHPDSHQLFIGNLPHEVDKSELKDFFQNFGNVVELRINSGGKLPNFGFVVFDDSEPVQKVLSNRPIMFRGAVRLNVEEKKTRAAREGDRRDNRLRGPGGPRGGPSGGMRGPPRGGMVQKPGFGVGRGITTPRQ.

The NTF2 domain maps to 11-133 (VGREFVRQYY…FYVHNDIFRY (123 aa)). Residues K36, K50, K59, K64, K76, and K123 each participate in a glycyl lysine isopeptide (Lys-Gly) (interchain with G-Cter in ubiquitin) cross-link. The tract at residues 142 to 224 (VTEPQEESEE…EAALEEAAPD (83 aa)) is acidic disordered region. T143 is subject to Phosphothreonine. The tract at residues 144 to 330 (EPQEESEEEV…GEPGDVEPRR (187 aa)) is disordered. Acidic residues-rich tracts occupy residues 145–157 (PQEE…EEPE) and 184–205 (EHLE…EPEP). S149 carries the post-translational modification Phosphoserine. Residues S231, S248, and S251 each carry the phosphoserine modification. Positions 248 to 257 (SWASVTSKNL) are enriched in polar residues. Composition is skewed to basic and acidic residues over residues 295-305 (PQRDQRVREQR) and 316-330 (PIRE…EPRR). In terms of domain architecture, RRM spans 338–413 (HQLFIGNLPH…VRLNVEEKKT (76 aa)). Glycyl lysine isopeptide (Lys-Gly) (interchain with G-Cter in ubiquitin) cross-links involve residues K351 and K355. S371 is modified (phosphoserine). A Glycyl lysine isopeptide (Lys-Gly) (interchain with G-Cter in ubiquitin) cross-link involves residue K374. N6-acetyllysine; alternate is present on K374. A Glycyl lysine isopeptide (Lys-Gly) (interchain with G-Cter in SUMO2); alternate cross-link involves residue K374. A Glycyl lysine isopeptide (Lys-Gly) (interchain with G-Cter in ubiquitin); alternate cross-link involves residue K391. The tract at residues 408-464 (VEEKKTRAAREGDRRDNRLRGPGGPRGGPSGGMRGPPRGGMVQKPGFGVGRGITTPR) is RG-rich region. Basic and acidic residues predominate over residues 411–426 (KKTRAAREGDRRDNRL). Residues 411-465 (KKTRAAREGDRRDNRLRGPGGPRGGPSGGMRGPPRGGMVQKPGFGVGRGITTPRQ) form a disordered region. The residue at position 427 (R427) is an Asymmetric dimethylarginine. Residues 428-445 (GPGGPRGGPSGGMRGPPR) are compositionally biased toward gly residues. R433 is modified (asymmetric dimethylarginine; alternate). Omega-N-methylarginine; alternate occurs at positions 433, 445, 458, and 464. At R458 the chain carries Dimethylated arginine; alternate.

Homodimer and oligomer. Component of a TAU mRNP complex, at least composed of IGF2BP1, ELAVL4 and G3BP1. Binds to the SH3 domain of Ras GTPase-activating protein (RASA1) in proliferating cells. No interaction in quiescent cells. Interacts (via NTF2 domain) with USP10; inhibiting stress granule formation by lowering G3BP1 valence. Interacts (via NTF2 domain) with CAPRIN1; promoting stress granule formation by lowering the saturation-concentration of G3BP1. Interacts (via NTF2 domain) with UBAP2L; promoting stress granule formation. Associates (via RG-rich region) with 40S ribosome subunits. Interacts with RPTOR and SPAG5; this complex is increased by oxidative stress. Interacts with ATXN2L. Interacts with STYXL1. Interacts with CGAS (via N-terminus); this interaction promotes the DNA-binding and activation of CGAS. Interacts (via C-terminus) with RIGI. Interacts with PABPC1. Interacts with QKI (isoforms QKI6 and QKI7); directing N(7)-methylguanine-containing mRNAs to stress granules. Requires Mg(2+) as cofactor. Post-translationally, phosphorylation of the acidic disordered region regulates stress granule assembly. RASA1-dependent phosphorylation of Ser-149 induces a conformational change that prevents self-association. Dephosphorylation after HRAS activation is required for stress granule assembly. Ser-149 phosphorylation induces partial nuclear localization. In terms of processing, arg-435 is dimethylated, probably to asymmetric dimethylarginine. Ubiquitinated by TRIM21 via 'Lys-63'-linked polyubiquitination in the NTF2 domain in response to heat shock, leading to stress granule disassembly: ubiquitination promotes interaction with the FAF2 adapter, followed by interaction with VCP, which extracts G3BP1 from stress granules, leading to stress granule disassembly. In case of prolonged stress, ubiquitination by TRIM21 leads to autophagy-dependent degradation of G3BP1 via recruitment of ubiquitinated G3BP1 by SQSTM1 and/or CALCOCO2 to autophagosomes. Ubiquitous.

The protein localises to the cytoplasm. Its subcellular location is the cytosol. The protein resides in the perikaryon. It is found in the stress granule. It localises to the nucleus. The catalysed reaction is ATP + H2O = ADP + phosphate + H(+). With respect to regulation, under physiological conditions, G3BP1 adopts a compact state that is stabilized by intramolecular interactions between the RG-rich and the acidic regions that inhibit phase separation. Upon stress, polysomes disassemble and mRNAs are released in an unfolded protein-free state. Binding of unfolded mRNA to G3BP1 outcompetes the intramolecular interactions and RNA-bound G3BP1 adopts an expanded conformation in which the RG-rich region becomes exposed to engage in protein-protein and protein-RNA interactions, allowing physical cross-linking of RNA molecules to form protein-RNA condensates, leading to liquid-liquid phase separation (LLPS). Its function is as follows. Protein involved in various processes, such as stress granule formation and innate immunity. Plays an essential role in stress granule formation. Stress granules are membraneless compartments that store mRNAs and proteins, such as stalled translation pre-initiation complexes, in response to stress. Promotes formation of stress granules phase-separated membraneless compartment by undergoing liquid-liquid phase separation (LLPS) upon unfolded RNA-binding: functions as a molecular switch that triggers RNA-dependent LLPS in response to a rise in intracellular free RNA concentrations. Also acts as an ATP- and magnesium-dependent helicase: unwinds DNA/DNA, RNA/DNA, and RNA/RNA substrates with comparable efficiency. Acts unidirectionally by moving in the 5' to 3' direction along the bound single-stranded DNA. Unwinds preferentially partial DNA and RNA duplexes having a 17 bp annealed portion and either a hanging 3' tail or hanging tails at both 5'- and 3'-ends. Plays an essential role in innate immunity by promoting CGAS and RIGI activity. Participates in the DNA-triggered cGAS/STING pathway by promoting the DNA binding and activation of CGAS. Triggers the condensation of cGAS, a process probably linked to the formation of membrane-less organelles. Also enhances RIGI-induced type I interferon production probably by helping RIGI at sensing pathogenic RNA. May also act as a phosphorylation-dependent sequence-specific endoribonuclease in vitro: Cleaves exclusively between cytosine and adenine and cleaves MYC mRNA preferentially at the 3'-UTR. In Mus musculus (Mouse), this protein is Ras GTPase-activating protein-binding protein 1 (G3bp1).